The sequence spans 167 residues: U-scoloptoxin(08)-Er5b (167 aa).

The N-terminal stretch at 1–22 (MKTNCEFPLLCLLIVLVANVEG) is a signal peptide. Residues 23–94 (EVEDTGLKMV…KRLWRNWERR (72 aa)) constitute a propeptide that is removed on maturation. RLWRNWE repeat units follow at residues 34-40 (RLWRNWE), 61-67 (RLWRNWE), and 86-92 (RLWRNWE). A Pyrrolidone carboxylic acid modification is found at Q95. One copy of the RLWRNWE 4; approximate repeat lies at 107-113 (ELWRNWE). Positions 112–118 (WEDLKRR) are excised as a propeptide. The residue at position 119 (Q119) is a Pyrrolidone carboxylic acid. The stretch at 134–140 (RLWRNWE) is one RLWRNWE 5 repeat. The propeptide occupies 139–167 (WEDNHATLRKRSADSLSRQKRLGKERGKE). Residues 147–167 (RKRSADSLSRQKRLGKERGKE) form a disordered region.

Belongs to the scoloptoxin-08 family. Expressed by the venom gland.

It is found in the secreted. The protein is U-scoloptoxin(08)-Er5b of Ethmostigmus rubripes (Giant centipede).